The primary structure comprises 594 residues: ATPase family AAA domain-containing protein 3 (594 aa).

Positions 1-50 (MSWLFGLNKGQQGPPSVPGFPEPPSPPGGSGDGGDKNKPKDKWSNFDPTG) are disordered. Residues 1–242 (MSWLFGLNKG…FRAFISDWDK (242 aa)) are Mitochondrial intermembrane-facing. Positions 15 to 27 (PSVPGFPEPPSPP) are enriched in pro residues. Over residues 33-44 (GGDKNKPKDKWS) the composition is skewed to basic and acidic residues. A coiled-coil region spans residues 51–213 (LERAAKAARE…RENIRLKAAE (163 aa)). The chain crosses the membrane as a helical span at residues 243–260 (VTATVAGLSLLAVGIYTA). The Mitochondrial matrix portion of the chain corresponds to 261–594 (KNATGVAGRY…LQPLLEGTPV (334 aa)). Residue 348–355 (GPPGTGKT) participates in ATP binding. Basic and acidic residues predominate over residues 571–581 (EGKENAAKESG). Positions 571–594 (EGKENAAKESGKNPLQPLLEGTPV) are disordered.

It belongs to the AAA ATPase family.

It is found in the mitochondrion inner membrane. The protein resides in the mitochondrion matrix. Its subcellular location is the mitochondrion nucleoid. Its function is as follows. Essential for mitochondrial network organization, mitochondrial metabolism and cell growth at organism and cellular level. May play an important role in mitochondrial protein synthesis. May also participate in mitochondrial DNA replication. May bind to mitochondrial DNA D-loops and contribute to nucleoid stability. Required for enhanced channeling of cholesterol for hormone-dependent steroidogenesis. This chain is ATPase family AAA domain-containing protein 3 (atad3), found in Xenopus tropicalis (Western clawed frog).